Reading from the N-terminus, the 327-residue chain is Porphobilinogen deaminase (327 aa).

At C250 the chain carries S-(dipyrrolylmethanemethyl)cysteine.

This sequence belongs to the HMBS family. In terms of assembly, monomer. The cofactor is dipyrromethane.

It carries out the reaction 4 porphobilinogen + H2O = hydroxymethylbilane + 4 NH4(+). The protein operates within porphyrin-containing compound metabolism; protoporphyrin-IX biosynthesis; coproporphyrinogen-III from 5-aminolevulinate: step 2/4. Tetrapolymerization of the monopyrrole PBG into the hydroxymethylbilane pre-uroporphyrinogen in several discrete steps. The protein is Porphobilinogen deaminase of Paraburkholderia phymatum (strain DSM 17167 / CIP 108236 / LMG 21445 / STM815) (Burkholderia phymatum).